The primary structure comprises 856 residues: Probable alpha,alpha-trehalose-phosphate synthase [UDP-forming] 8 (856 aa).

S5 carries the phosphoserine modification. At T32 the chain carries Phosphothreonine. A glycosyltransferase region spans residues E57–R541.

The protein in the N-terminal section; belongs to the glycosyltransferase 20 family. It in the C-terminal section; belongs to the trehalose phosphatase family. Expressed in leaves, roots, stems and flowers.

It carries out the reaction D-glucose 6-phosphate + UDP-alpha-D-glucose = alpha,alpha-trehalose 6-phosphate + UDP + H(+). This chain is Probable alpha,alpha-trehalose-phosphate synthase [UDP-forming] 8 (TPS8), found in Arabidopsis thaliana (Mouse-ear cress).